A 410-amino-acid polypeptide reads, in one-letter code: Lipoyl synthase, mitochondrial (410 aa).

Residues M1–Y29 constitute a mitochondrion transit peptide. Residues Y29–P39 are compositionally biased toward polar residues. Residues Y29–P49 are disordered. [4Fe-4S] cluster is bound by residues C129, C134, C140, C160, C164, C167, and S375. Residues G143 to L364 enclose the Radical SAM core domain.

Belongs to the radical SAM superfamily. Lipoyl synthase family. The cofactor is [4Fe-4S] cluster.

The protein localises to the mitochondrion. The enzyme catalyses [[Fe-S] cluster scaffold protein carrying a second [4Fe-4S](2+) cluster] + N(6)-octanoyl-L-lysyl-[protein] + 2 oxidized [2Fe-2S]-[ferredoxin] + 2 S-adenosyl-L-methionine + 4 H(+) = [[Fe-S] cluster scaffold protein] + N(6)-[(R)-dihydrolipoyl]-L-lysyl-[protein] + 4 Fe(3+) + 2 hydrogen sulfide + 2 5'-deoxyadenosine + 2 L-methionine + 2 reduced [2Fe-2S]-[ferredoxin]. Its pathway is protein modification; protein lipoylation via endogenous pathway; protein N(6)-(lipoyl)lysine from octanoyl-[acyl-carrier-protein]: step 2/2. In terms of biological role, catalyzes the radical-mediated insertion of two sulfur atoms into the C-6 and C-8 positions of the octanoyl moiety bound to the lipoyl domains of lipoate-dependent enzymes, thereby converting the octanoylated domains into lipoylated derivatives. The chain is Lipoyl synthase, mitochondrial from Arthroderma otae (strain ATCC MYA-4605 / CBS 113480) (Microsporum canis).